The primary structure comprises 401 residues: Argininosuccinate synthase (401 aa).

ATP is bound at residue 9–17 (AYSGGLDTS). An L-citrulline-binding site is contributed by Tyr-86. Gly-116 is a binding site for ATP. 3 residues coordinate L-aspartate: Thr-118, Asn-122, and Asp-123. Asn-122 is an L-citrulline binding site. Positions 126, 174, 183, 259, and 271 each coordinate L-citrulline.

This sequence belongs to the argininosuccinate synthase family. Type 1 subfamily. Homotetramer.

The protein localises to the cytoplasm. The catalysed reaction is L-citrulline + L-aspartate + ATP = 2-(N(omega)-L-arginino)succinate + AMP + diphosphate + H(+). Its pathway is amino-acid biosynthesis; L-arginine biosynthesis; L-arginine from L-ornithine and carbamoyl phosphate: step 2/3. The chain is Argininosuccinate synthase from Bacillus mycoides (strain KBAB4) (Bacillus weihenstephanensis).